The following is a 428-amino-acid chain: Aminotransferase verI (428 aa).

An N6-(pyridoxal phosphate)lysine modification is found at Lys254.

This sequence belongs to the class-I pyridoxal-phosphate-dependent aminotransferase family. Pyridoxal 5'-phosphate serves as cofactor.

It functions in the pathway mycotoxin biosynthesis. Aminotransferase; part of the gene cluster that mediates the biosynthesis of 11'-deoxyverticillin A, one of the dimeric epipolythiodioxopiperazines (ETPs) from the verticillin family that act as mycotoxins. 11'-deoxyverticillin A is required for normal conidiation. The nonribosomal peptide synthetase verP is speculated to be responsible for condensation of amino acids to form the carbon skeleton of verticillin, whereas the cluster-specific tailoring enzymes are involved in further modifications leading to the production of 11'-deoxyverticillin A. The chain is Aminotransferase verI from Clonostachys rogersoniana.